The chain runs to 201 residues: NAD(P)H dehydrogenase (quinone) (201 aa).

In terms of domain architecture, Flavodoxin-like spans 4–191; that stretch reads VLVLYYSMYG…KIAKCQGVHV (188 aa). FMN-binding positions include 10 to 15 and 79 to 81; these read SMYGHV and TRF. Y12 contacts NAD(+). Position 99 (W99) interacts with substrate. FMN-binding positions include 114–120 and H135; that span reads STGTQHG.

The protein belongs to the WrbA family. The cofactor is FMN.

The catalysed reaction is a quinone + NADH + H(+) = a quinol + NAD(+). It catalyses the reaction a quinone + NADPH + H(+) = a quinol + NADP(+). The chain is NAD(P)H dehydrogenase (quinone) from Hydrogenovibrio crunogenus (strain DSM 25203 / XCL-2) (Thiomicrospira crunogena).